The following is a 57-amino-acid chain: uncharacterized protein (57 aa).

This is an uncharacterized protein from Bacillus subtilis (strain 168).